Consider the following 188-residue polypeptide: Elongation factor P (188 aa).

It belongs to the elongation factor P family.

The protein localises to the cytoplasm. The protein operates within protein biosynthesis; polypeptide chain elongation. Functionally, involved in peptide bond synthesis. Stimulates efficient translation and peptide-bond synthesis on native or reconstituted 70S ribosomes in vitro. Probably functions indirectly by altering the affinity of the ribosome for aminoacyl-tRNA, thus increasing their reactivity as acceptors for peptidyl transferase. The polypeptide is Elongation factor P (Bdellovibrio bacteriovorus (strain ATCC 15356 / DSM 50701 / NCIMB 9529 / HD100)).